We begin with the raw amino-acid sequence, 340 residues long: NADPH dehydrogenase (340 aa).

FMN is bound at residue 23 to 26; that stretch reads SPMC. Position 28 (Y28) interacts with substrate. Positions 60 and 102 each coordinate FMN. 164-167 contributes to the substrate binding site; the sequence is HGAH. FMN contacts are provided by residues R215 and 307-308; that span reads AR.

Belongs to the NADH:flavin oxidoreductase/NADH oxidase family. NamA subfamily. As to quaternary structure, homotetramer. It depends on FMN as a cofactor.

It carries out the reaction A + NADPH + H(+) = AH2 + NADP(+). Its function is as follows. Catalyzes the reduction of the double bond of an array of alpha,beta-unsaturated aldehydes and ketones. It also reduces the nitro group of nitroester and nitroaromatic compounds. It could have a role in detoxification processes. The sequence is that of NADPH dehydrogenase from Geobacillus sp. (strain WCH70).